Consider the following 285-residue polypeptide: Tropomyosin alpha-3 chain (285 aa).

Positions Met1–Ile285 form a coiled coil. Position 2 is an N-acetylmethionine (Met2). Met2 bears the N-acetylalanine mark. A Phosphothreonine modification is found at Thr54. A phosphoserine mark is found at Ser62 and Ser88. At Thr109 the chain carries Phosphothreonine. Phosphoserine occurs at positions 207 and 216. Ile228 carries the N6-acetyllysine modification. Thr253 is modified (phosphothreonine). Position 262 is a phosphotyrosine (Tyr262). The residue at position 272 (Ser272) is a Phosphoserine. A Phosphothreonine modification is found at Thr283. Phosphoserine is present on Ser284.

This sequence belongs to the tropomyosin family. As to quaternary structure, homodimer. Heterodimer of an alpha (TPM1, TPM3 or TPM4) and a beta (TPM2) chain. Interacts with TMOD1. Interacts with TNNT1.

It is found in the cytoplasm. It localises to the cytoskeleton. Its function is as follows. Binds to actin filaments in muscle and non-muscle cells. Plays a central role, in association with the troponin complex, in the calcium dependent regulation of vertebrate striated muscle contraction. Smooth muscle contraction is regulated by interaction with caldesmon. In non-muscle cells is implicated in stabilizing cytoskeleton actin filaments. This Mus musculus (Mouse) protein is Tropomyosin alpha-3 chain (Tpm3).